The sequence spans 368 residues: D-Ala-D/L-Ala epimerase (368 aa).

Substrate contacts are provided by residues Thr-135 and Lys-160–Lys-162. Asp-190, Glu-216, and Asp-241 together coordinate Mg(2+). Substrate is bound by residues Lys-265 and Asp-318–Asp-320.

It belongs to the mandelate racemase/muconate lactonizing enzyme family. The cofactor is Mg(2+).

Functionally, catalyzes the epimerization of D-Ala-D-Ala to D-Ala-L-Ala. Has broad substrate specificity and catalyzes the epimerization of a variety of dipeptides containing an N-terminal Ala followed by a hydrophobic or polar residue, such as Val, Ser and Met (in vitro). The protein is D-Ala-D/L-Ala epimerase (tfdD) of Cytophaga hutchinsonii (strain ATCC 33406 / DSM 1761 / CIP 103989 / NBRC 15051 / NCIMB 9469 / D465).